A 243-amino-acid chain; its full sequence is UPF0502 protein H16_B1091 (243 aa).

Residues 1–23 form a disordered region; it reads MQSNHDSDASQAGDRPARPALRP.

It belongs to the UPF0502 family.

The chain is UPF0502 protein H16_B1091 from Cupriavidus necator (strain ATCC 17699 / DSM 428 / KCTC 22496 / NCIMB 10442 / H16 / Stanier 337) (Ralstonia eutropha).